The following is an 812-amino-acid chain: Probable inorganic carbon transporter subunit DabA (812 aa).

Zn(2+) is bound by residues Cys337, Asp339, His499, and Cys514.

It belongs to the inorganic carbon transporter (TC 9.A.2) DabA family. Forms a complex with DabB. Requires Zn(2+) as cofactor.

The protein localises to the cell inner membrane. In terms of biological role, part of an energy-coupled inorganic carbon pump. This is Probable inorganic carbon transporter subunit DabA from Xanthomonas oryzae pv. oryzae (strain KACC10331 / KXO85).